We begin with the raw amino-acid sequence, 132 residues long: Small ribosomal subunit protein bS16 (132 aa).

A compositionally biased stretch (basic and acidic residues) spans 82 to 107 (DSKVQSKKEHNANKVKKEVKKPEAKK). A disordered region spans residues 82–132 (DSKVQSKKEHNANKVKKEVKKPEAKKAAASKPASKPSASKSASQKKTVSKK). Over residues 108–132 (AAASKPASKPSASKSASQKKTVSKK) the composition is skewed to low complexity.

It belongs to the bacterial ribosomal protein bS16 family.

In Malacoplasma penetrans (strain HF-2) (Mycoplasma penetrans), this protein is Small ribosomal subunit protein bS16.